The following is a 333-amino-acid chain: Glycerol-3-phosphate dehydrogenase [NAD(P)+] (333 aa).

NADPH is bound by residues tryptophan 11, arginine 30, and lysine 105. Residues lysine 105, glycine 133, and serine 135 each contribute to the sn-glycerol 3-phosphate site. An NADPH-binding site is contributed by alanine 137. Residues lysine 188, aspartate 241, serine 251, arginine 252, and asparagine 253 each contribute to the sn-glycerol 3-phosphate site. Residue lysine 188 is the Proton acceptor of the active site. Arginine 252 serves as a coordination point for NADPH. Residues valine 276 and glutamate 278 each contribute to the NADPH site.

Belongs to the NAD-dependent glycerol-3-phosphate dehydrogenase family.

The protein localises to the cytoplasm. It carries out the reaction sn-glycerol 3-phosphate + NAD(+) = dihydroxyacetone phosphate + NADH + H(+). It catalyses the reaction sn-glycerol 3-phosphate + NADP(+) = dihydroxyacetone phosphate + NADPH + H(+). The protein operates within membrane lipid metabolism; glycerophospholipid metabolism. Its function is as follows. Catalyzes the reduction of the glycolytic intermediate dihydroxyacetone phosphate (DHAP) to sn-glycerol 3-phosphate (G3P), the key precursor for phospholipid synthesis. The protein is Glycerol-3-phosphate dehydrogenase [NAD(P)+] of Methylibium petroleiphilum (strain ATCC BAA-1232 / LMG 22953 / PM1).